A 204-amino-acid chain; its full sequence is Large ribosomal subunit protein bL25 (204 aa).

Belongs to the bacterial ribosomal protein bL25 family. CTC subfamily. Part of the 50S ribosomal subunit; part of the 5S rRNA/L5/L18/L25 subcomplex. Contacts the 5S rRNA. Binds to the 5S rRNA independently of L5 and L18.

This is one of the proteins that binds to the 5S RNA in the ribosome where it forms part of the central protuberance. The chain is Large ribosomal subunit protein bL25 from Burkholderia pseudomallei (strain 668).